A 327-amino-acid polypeptide reads, in one-letter code: Lipoyl synthase (327 aa).

Residues cysteine 66, cysteine 71, cysteine 77, cysteine 92, cysteine 96, cysteine 99, and serine 306 each contribute to the [4Fe-4S] cluster site. The region spanning 78–295 is the Radical SAM core domain; that stretch reads FSKGTATFMI…EKEAYELGFT (218 aa).

It belongs to the radical SAM superfamily. Lipoyl synthase family. [4Fe-4S] cluster serves as cofactor.

It localises to the cytoplasm. It carries out the reaction [[Fe-S] cluster scaffold protein carrying a second [4Fe-4S](2+) cluster] + N(6)-octanoyl-L-lysyl-[protein] + 2 oxidized [2Fe-2S]-[ferredoxin] + 2 S-adenosyl-L-methionine + 4 H(+) = [[Fe-S] cluster scaffold protein] + N(6)-[(R)-dihydrolipoyl]-L-lysyl-[protein] + 4 Fe(3+) + 2 hydrogen sulfide + 2 5'-deoxyadenosine + 2 L-methionine + 2 reduced [2Fe-2S]-[ferredoxin]. Its pathway is protein modification; protein lipoylation via endogenous pathway; protein N(6)-(lipoyl)lysine from octanoyl-[acyl-carrier-protein]: step 2/2. Its function is as follows. Catalyzes the radical-mediated insertion of two sulfur atoms into the C-6 and C-8 positions of the octanoyl moiety bound to the lipoyl domains of lipoate-dependent enzymes, thereby converting the octanoylated domains into lipoylated derivatives. This is Lipoyl synthase from Neisseria gonorrhoeae (strain ATCC 700825 / FA 1090).